Reading from the N-terminus, the 503-residue chain is ATP synthase subunit alpha (503 aa).

An ATP-binding site is contributed by 169–176; that stretch reads GDRKTGKT.

The protein belongs to the ATPase alpha/beta chains family. As to quaternary structure, F-type ATPases have 2 components, CF(1) - the catalytic core - and CF(0) - the membrane proton channel. CF(1) has five subunits: alpha(3), beta(3), gamma(1), delta(1), epsilon(1). CF(0) has three main subunits: a(1), b(2) and c(9-12). The alpha and beta chains form an alternating ring which encloses part of the gamma chain. CF(1) is attached to CF(0) by a central stalk formed by the gamma and epsilon chains, while a peripheral stalk is formed by the delta and b chains.

Its subcellular location is the cell membrane. The catalysed reaction is ATP + H2O + 4 H(+)(in) = ADP + phosphate + 5 H(+)(out). Functionally, produces ATP from ADP in the presence of a proton gradient across the membrane. The alpha chain is a regulatory subunit. The sequence is that of ATP synthase subunit alpha from Lactobacillus delbrueckii subsp. bulgaricus (strain ATCC 11842 / DSM 20081 / BCRC 10696 / JCM 1002 / NBRC 13953 / NCIMB 11778 / NCTC 12712 / WDCM 00102 / Lb 14).